The following is a 285-amino-acid chain: Shikimate dehydrogenase (NADP(+)) (285 aa).

Residues 20–22 (SLS) and Thr67 contribute to the shikimate site. The active-site Proton acceptor is the Lys71. Residue Glu83 participates in NADP(+) binding. Residues Asn92 and Asp107 each coordinate shikimate. Residues 132 to 136 (GAGGA) and Leu230 contribute to the NADP(+) site. Residue Tyr232 coordinates shikimate. Gly253 is a binding site for NADP(+).

Belongs to the shikimate dehydrogenase family. Homodimer.

The catalysed reaction is shikimate + NADP(+) = 3-dehydroshikimate + NADPH + H(+). It participates in metabolic intermediate biosynthesis; chorismate biosynthesis; chorismate from D-erythrose 4-phosphate and phosphoenolpyruvate: step 4/7. Involved in the biosynthesis of the chorismate, which leads to the biosynthesis of aromatic amino acids. Catalyzes the reversible NADPH linked reduction of 3-dehydroshikimate (DHSA) to yield shikimate (SA). The protein is Shikimate dehydrogenase (NADP(+)) of Salinibacter ruber (strain DSM 13855 / M31).